A 791-amino-acid polypeptide reads, in one-letter code: Penicillin-binding protein 1A (791 aa).

Residues 1 to 6 are Cytoplasmic-facing; it reads MYKSLF. A helical; Signal-anchor for type II membrane protein transmembrane segment spans residues 7–27; that stretch reads FCLKILALLFLIGCGIVAYII. Residues 28 to 791 are Periplasmic-facing; sequence YYYSRDLPDY…TEKDQSQEIY (764 aa). Residues 49 to 220 form a transglycosylase region; sequence TRIYSRDGKL…SELNPEKNYA (172 aa). Residue Glu87 is the Proton donor; for transglycosylase activity of the active site. A transpeptidase region spans residues 398–711; it reads DVIVVEPVKD…SSVVLPIFID (314 aa). The Acyl-ester intermediate; for transpeptidase activity role is filled by Ser457.

The protein in the N-terminal section; belongs to the glycosyltransferase 51 family. In the C-terminal section; belongs to the transpeptidase family.

It is found in the cell inner membrane. It carries out the reaction [GlcNAc-(1-&gt;4)-Mur2Ac(oyl-L-Ala-gamma-D-Glu-L-Lys-D-Ala-D-Ala)](n)-di-trans,octa-cis-undecaprenyl diphosphate + beta-D-GlcNAc-(1-&gt;4)-Mur2Ac(oyl-L-Ala-gamma-D-Glu-L-Lys-D-Ala-D-Ala)-di-trans,octa-cis-undecaprenyl diphosphate = [GlcNAc-(1-&gt;4)-Mur2Ac(oyl-L-Ala-gamma-D-Glu-L-Lys-D-Ala-D-Ala)](n+1)-di-trans,octa-cis-undecaprenyl diphosphate + di-trans,octa-cis-undecaprenyl diphosphate + H(+). The catalysed reaction is Preferential cleavage: (Ac)2-L-Lys-D-Ala-|-D-Ala. Also transpeptidation of peptidyl-alanyl moieties that are N-acyl substituents of D-alanine.. It participates in cell wall biogenesis; peptidoglycan biosynthesis. Cell wall formation. Synthesis of cross-linked peptidoglycan from the lipid intermediates. The enzyme has a penicillin-insensitive transglycosylase N-terminal domain (formation of linear glycan strands) and a penicillin-sensitive transpeptidase C-terminal domain (cross-linking of the peptide subunits). This is Penicillin-binding protein 1A (mrcA) from Rickettsia bellii (strain RML369-C).